Consider the following 822-residue polypeptide: Putative endoplasmic reticulum metallopeptidase 1 (822 aa).

The Cytoplasmic portion of the chain corresponds to 1–14 (MVLVCASSSKCKRN). A helical transmembrane segment spans residues 15 to 35 (TFLQLAMVLFAVVMARIALYF). Residues 36 to 365 (HNHLDEPLVD…FNSLFFMYSK (330 aa)) are Lumenal-facing. N-linked (GlcNAc...) asparagine glycosylation occurs at Asn-146. 2 residues coordinate Zn(2+): His-161 and Asp-173. Catalysis depends on Glu-207, which acts as the Proton acceptor. 2 residues coordinate Zn(2+): Glu-208 and Glu-234. The N-linked (GlcNAc...) asparagine glycan is linked to Asn-291. Residue His-307 coordinates Zn(2+). The helical transmembrane segment at 366-384 (LTSKILNTLVGGLGILLTL) threads the bilayer. Residues 385 to 392 (RGSEGSFT) lie on the Cytoplasmic side of the membrane. Residues 393-413 (VALIAQVISIAGIFVIPNIWA) traverse the membrane as a helical segment. Over 414–431 (YILGNVLDCGMSWFRNEY) the chain is Lumenal. The chain crosses the membrane as a helical span at residues 432 to 452 (WPLFIYLPAIFASLFFTESLF). At 453-463 (KRSEHLALRAT) the chain is on the cytoplasmic side. Residues 464 to 484 (IFIFSLLTFIPLPSAYLFTII) traverse the membrane as a helical segment. Position 485 (Asp-485) is a topological domain, lumenal. Residues 486 to 506 (FFMVFALFLNDKILAKPGTVH) form a helical membrane-spanning segment. Over 507–514 (PLTYFIGS) the chain is Cytoplasmic. The chain crosses the membrane as a helical span at residues 515–535 (IGAMTVGFESAINLLEIFVPL). Residues 536–547 (TGRIGTDKVADN) lie on the Lumenal side of the membrane. The chain crosses the membrane as a helical span at residues 548-568 (VVATVCVCGFNIYFPLMSPWI). Topologically, residues 569–575 (QRFRSRC) are cytoplasmic. A helical transmembrane segment spans residues 576-596 (CFRLGLLFSIFVVGFSSFILA). At 597 to 822 (KQDTYYDSLH…GVVSGNFKLE (226 aa)) the chain is on the lumenal side. N-linked (GlcNAc...) asparagine glycans are attached at residues Asn-617, Asn-682, Asn-706, and Asn-758.

The protein belongs to the peptidase M28 family. M28B subfamily. Zn(2+) serves as cofactor.

It is found in the endoplasmic reticulum membrane. This is Putative endoplasmic reticulum metallopeptidase 1 from Schizosaccharomyces pombe (strain 972 / ATCC 24843) (Fission yeast).